The following is a 348-amino-acid chain: Mannonate dehydratase (348 aa).

It belongs to the mannonate dehydratase family. It depends on Fe(2+) as a cofactor. Requires Mn(2+) as cofactor.

It carries out the reaction D-mannonate = 2-dehydro-3-deoxy-D-gluconate + H2O. Its pathway is carbohydrate metabolism; pentose and glucuronate interconversion. In terms of biological role, catalyzes the dehydration of D-mannonate. The sequence is that of Mannonate dehydratase from Streptococcus uberis (strain ATCC BAA-854 / 0140J).